Consider the following 581-residue polypeptide: ATP-dependent lipid A-core flippase (581 aa).

A run of 5 helical transmembrane segments spans residues 27 to 47 (VFLA…FPAI), 63 to 83 (MVWL…VIVY), 154 to 174 (IALI…TLAI), 251 to 271 (MTPI…FLAL), and 279 to 299 (GASA…ISPV). Residues 28–311 (FLAVIGMVGT…LATVNPTIQR (284 aa)) form the ABC transmembrane type-1 domain. In terms of domain architecture, ABC transporter spans 343-579 (ICFDNVSLRY…GSYYANLSRL (237 aa)). ATP is bound at residue 377-384 (GASGGGKS).

This sequence belongs to the ABC transporter superfamily. Lipid exporter (TC 3.A.1.106) family. As to quaternary structure, homodimer.

The protein localises to the cell inner membrane. The catalysed reaction is ATP + H2O + lipid A-core oligosaccharideSide 1 = ADP + phosphate + lipid A-core oligosaccharideSide 2.. Its function is as follows. Involved in lipopolysaccharide (LPS) biosynthesis. Translocates lipid A-core from the inner to the outer leaflet of the inner membrane. Transmembrane domains (TMD) form a pore in the inner membrane and the ATP-binding domain (NBD) is responsible for energy generation. The chain is ATP-dependent lipid A-core flippase from Albidiferax ferrireducens (strain ATCC BAA-621 / DSM 15236 / T118) (Rhodoferax ferrireducens).